A 294-amino-acid chain; its full sequence is Cyclin-G1 (294 aa).

Belongs to the cyclin family. Cyclin G subfamily.

It is found in the nucleus. Functionally, may play a role in growth regulation. Is associated with G2/M phase arrest in response to DNA damage. May be an intermediate by which p53 mediates its role as an inhibitor of cellular proliferation. The chain is Cyclin-G1 (Ccng1) from Rattus norvegicus (Rat).